The chain runs to 237 residues: Leucyl/phenylalanyl-tRNA--protein transferase (237 aa).

It belongs to the L/F-transferase family.

Its subcellular location is the cytoplasm. It carries out the reaction N-terminal L-lysyl-[protein] + L-leucyl-tRNA(Leu) = N-terminal L-leucyl-L-lysyl-[protein] + tRNA(Leu) + H(+). It catalyses the reaction N-terminal L-arginyl-[protein] + L-leucyl-tRNA(Leu) = N-terminal L-leucyl-L-arginyl-[protein] + tRNA(Leu) + H(+). The catalysed reaction is L-phenylalanyl-tRNA(Phe) + an N-terminal L-alpha-aminoacyl-[protein] = an N-terminal L-phenylalanyl-L-alpha-aminoacyl-[protein] + tRNA(Phe). Functions in the N-end rule pathway of protein degradation where it conjugates Leu, Phe and, less efficiently, Met from aminoacyl-tRNAs to the N-termini of proteins containing an N-terminal arginine or lysine. The polypeptide is Leucyl/phenylalanyl-tRNA--protein transferase (Shewanella baltica (strain OS223)).